A 235-amino-acid polypeptide reads, in one-letter code: Hydroxyacylglutathione hydrolase (235 aa).

Zn(2+)-binding residues include His53, His55, Asp57, His58, His109, Asp127, and His165.

It belongs to the metallo-beta-lactamase superfamily. Glyoxalase II family. As to quaternary structure, monomer. Requires Zn(2+) as cofactor.

It carries out the reaction an S-(2-hydroxyacyl)glutathione + H2O = a 2-hydroxy carboxylate + glutathione + H(+). It participates in secondary metabolite metabolism; methylglyoxal degradation; (R)-lactate from methylglyoxal: step 2/2. Its function is as follows. Thiolesterase that catalyzes the hydrolysis of S-D-lactoyl-glutathione to form glutathione and D-lactic acid. The chain is Hydroxyacylglutathione hydrolase from Glaesserella parasuis serovar 5 (strain SH0165) (Haemophilus parasuis).